Here is a 185-residue protein sequence, read N- to C-terminus: Large ribosomal subunit protein uL5 (185 aa).

This sequence belongs to the universal ribosomal protein uL5 family. In terms of assembly, part of the 50S ribosomal subunit; part of the 5S rRNA/L5/L18/L25 subcomplex. Contacts the 5S rRNA and the P site tRNA. Forms a bridge to the 30S subunit in the 70S ribosome.

This is one of the proteins that bind and probably mediate the attachment of the 5S RNA into the large ribosomal subunit, where it forms part of the central protuberance. In the 70S ribosome it contacts protein S13 of the 30S subunit (bridge B1b), connecting the 2 subunits; this bridge is implicated in subunit movement. Contacts the P site tRNA; the 5S rRNA and some of its associated proteins might help stabilize positioning of ribosome-bound tRNAs. The protein is Large ribosomal subunit protein uL5 of Rhodopseudomonas palustris (strain BisB5).